Here is a 345-residue protein sequence, read N- to C-terminus: Dihydroorotase (345 aa).

2 residues coordinate Zn(2+): H13 and H15. Substrate contacts are provided by residues 15–17 (HFR) and N41. Residues K98, H135, and H173 each coordinate Zn(2+). At K98 the chain carries N6-carboxylysine. H135 is a substrate binding site. A substrate-binding site is contributed by L218. Position 246 (D246) interacts with Zn(2+). Residue D246 is part of the active site. Positions 250 and 262 each coordinate substrate.

It belongs to the metallo-dependent hydrolases superfamily. DHOase family. Class II DHOase subfamily. As to quaternary structure, homodimer. Zn(2+) serves as cofactor.

It catalyses the reaction (S)-dihydroorotate + H2O = N-carbamoyl-L-aspartate + H(+). It participates in pyrimidine metabolism; UMP biosynthesis via de novo pathway; (S)-dihydroorotate from bicarbonate: step 3/3. Catalyzes the reversible cyclization of carbamoyl aspartate to dihydroorotate. This is Dihydroorotase from Shewanella pealeana (strain ATCC 700345 / ANG-SQ1).